Here is a 628-residue protein sequence, read N- to C-terminus: Protein ETHYLENE INSENSITIVE 3 (628 aa).

A coiled-coil region spans residues 38–68 (EDDYTDDEIDVDELERRMWRDKMRLKRLKEQ). Positions 66 to 79 (KEQDKGKEGVDAAK) are enriched in basic and acidic residues. The disordered stretch occupies residues 66–92 (KEQDKGKEGVDAAKQRQSQEQARRKKM). The interval 174-306 (TPHTLQELQD…SLARELYPES (133 aa)) is DNA-binding domain.

This sequence belongs to the EIN3 family. As to quaternary structure, acts as a homodimer to bind the primary ethylene response element. Interacts with TAF12B. Interacts with KIN10. Binds to ENAP1 in the presence of ethylene; this reaction facilitates its association with histone. In terms of processing, phosphorylated by KIN10.

The protein localises to the nucleus. With respect to regulation, activated by phosphorylation by MPK3 and MPK6. Down-regulated by KIN10 that controls its protein stability under a phosphorylation-dependent manner. Satnilitzed during hypoxia (e.g. submergences) via a ceramides-triggered and CTR1-dependent manner. In terms of biological role, transcription factor acting as a positive regulator in the ethylene response pathway, by promoting histone acetylation in an ENAP1-dependent manner, thus accelerating the expression of ethylene-responsive genes. Binds DNA. Is required for ethylene responsiveness in adult plant tissues. Binds a primary ethylene response element present in the ETHYLENE-RESPONSE-FACTOR1 promoter with consequence to activate the transcription of this gene. This chain is Protein ETHYLENE INSENSITIVE 3, found in Arabidopsis thaliana (Mouse-ear cress).